A 759-amino-acid polypeptide reads, in one-letter code: Subtilisin-like protease SBT3.10 (759 aa).

An N-terminal signal peptide occupies residues 1 to 25 (MSKTIILLAFFLSIVLNVQISFVVA). Residues 26–108 (ESKVYVVYLG…VIPNTLYEMT (83 aa)) constitute a propeptide, activation peptide. Positions 29 to 106 (VYVVYLGEKE…VQVIPNTLYE (78 aa)) constitute an Inhibitor I9 domain. The region spanning 112 to 606 (TWDYLGVSPG…GGLINPEKAV (495 aa)) is the Peptidase S8 domain. Aspartate 142 acts as the Charge relay system in catalysis. Asparagine 175 and asparagine 202 each carry an N-linked (GlcNAc...) asparagine glycan. Histidine 218 functions as the Charge relay system in the catalytic mechanism. Asparagine 233 and asparagine 361 each carry an N-linked (GlcNAc...) asparagine glycan. Residues 390 to 464 (DCEKLSANPK…ELGTDILFYI (75 aa)) enclose the PA domain. Residue serine 537 is the Charge relay system of the active site.

It belongs to the peptidase S8 family.

It is found in the secreted. The polypeptide is Subtilisin-like protease SBT3.10 (Arabidopsis thaliana (Mouse-ear cress)).